The primary structure comprises 515 residues: Maturase K (515 aa).

This sequence belongs to the intron maturase 2 family. MatK subfamily.

Its subcellular location is the plastid. The protein localises to the chloroplast. Its function is as follows. Usually encoded in the trnK tRNA gene intron. Probably assists in splicing its own and other chloroplast group II introns. This is Maturase K from Sorghum bicolor (Sorghum).